The primary structure comprises 58 residues: Ribosome modulation factor (58 aa).

The protein belongs to the ribosome modulation factor family.

Its subcellular location is the cytoplasm. Its function is as follows. During stationary phase, converts 70S ribosomes to an inactive dimeric form (100S ribosomes). The protein is Ribosome modulation factor of Shewanella amazonensis (strain ATCC BAA-1098 / SB2B).